The primary structure comprises 293 residues: Formamidopyrimidine-DNA glycosylase (293 aa).

Residue P2 is the Schiff-base intermediate with DNA of the active site. Residue E3 is the Proton donor of the active site. Residue K58 is the Proton donor; for beta-elimination activity of the active site. Residues H104, R127, and R170 each contribute to the DNA site. An FPG-type zinc finger spans residues S257–T293. Catalysis depends on R283, which acts as the Proton donor; for delta-elimination activity.

The protein belongs to the FPG family. As to quaternary structure, monomer. The cofactor is Zn(2+).

The enzyme catalyses Hydrolysis of DNA containing ring-opened 7-methylguanine residues, releasing 2,6-diamino-4-hydroxy-5-(N-methyl)formamidopyrimidine.. It carries out the reaction 2'-deoxyribonucleotide-(2'-deoxyribose 5'-phosphate)-2'-deoxyribonucleotide-DNA = a 3'-end 2'-deoxyribonucleotide-(2,3-dehydro-2,3-deoxyribose 5'-phosphate)-DNA + a 5'-end 5'-phospho-2'-deoxyribonucleoside-DNA + H(+). Involved in base excision repair of DNA damaged by oxidation or by mutagenic agents. Acts as a DNA glycosylase that recognizes and removes damaged bases. Has a preference for oxidized purines, such as 7,8-dihydro-8-oxoguanine (8-oxoG). Has AP (apurinic/apyrimidinic) lyase activity and introduces nicks in the DNA strand. Cleaves the DNA backbone by beta-delta elimination to generate a single-strand break at the site of the removed base with both 3'- and 5'-phosphates. This Brucella melitensis biotype 1 (strain ATCC 23456 / CCUG 17765 / NCTC 10094 / 16M) protein is Formamidopyrimidine-DNA glycosylase.